The sequence spans 66 residues: Large ribosomal subunit protein bL31 (66 aa).

Zn(2+) contacts are provided by C16, C18, C36, and C39.

This sequence belongs to the bacterial ribosomal protein bL31 family. Type A subfamily. As to quaternary structure, part of the 50S ribosomal subunit. Zn(2+) is required as a cofactor.

In terms of biological role, binds the 23S rRNA. This chain is Large ribosomal subunit protein bL31, found in Sulfurovum sp. (strain NBC37-1).